The following is a 404-amino-acid chain: Probable tRNA sulfurtransferase (404 aa).

Residues 60 to 165 (HEVAESLKEI…DEAAYISYEN (106 aa)) form the THUMP domain. Residues 183–184 (ML), 208–209 (HF), arginine 265, glycine 287, and glutamine 296 each bind ATP.

This sequence belongs to the ThiI family.

It localises to the cytoplasm. It catalyses the reaction [ThiI sulfur-carrier protein]-S-sulfanyl-L-cysteine + a uridine in tRNA + 2 reduced [2Fe-2S]-[ferredoxin] + ATP + H(+) = [ThiI sulfur-carrier protein]-L-cysteine + a 4-thiouridine in tRNA + 2 oxidized [2Fe-2S]-[ferredoxin] + AMP + diphosphate. The enzyme catalyses [ThiS sulfur-carrier protein]-C-terminal Gly-Gly-AMP + S-sulfanyl-L-cysteinyl-[cysteine desulfurase] + AH2 = [ThiS sulfur-carrier protein]-C-terminal-Gly-aminoethanethioate + L-cysteinyl-[cysteine desulfurase] + A + AMP + 2 H(+). It functions in the pathway cofactor biosynthesis; thiamine diphosphate biosynthesis. In terms of biological role, catalyzes the ATP-dependent transfer of a sulfur to tRNA to produce 4-thiouridine in position 8 of tRNAs, which functions as a near-UV photosensor. Also catalyzes the transfer of sulfur to the sulfur carrier protein ThiS, forming ThiS-thiocarboxylate. This is a step in the synthesis of thiazole, in the thiamine biosynthesis pathway. The sulfur is donated as persulfide by IscS. The polypeptide is Probable tRNA sulfurtransferase (Streptococcus agalactiae serotype III (strain NEM316)).